A 206-amino-acid chain; its full sequence is Large ribosomal subunit protein uL4 (206 aa).

The interval methionine 63 to histidine 98 is disordered. Residues tyrosine 64 to serine 76 are compositionally biased toward basic residues.

It belongs to the universal ribosomal protein uL4 family. Part of the 50S ribosomal subunit.

Functionally, one of the primary rRNA binding proteins, this protein initially binds near the 5'-end of the 23S rRNA. It is important during the early stages of 50S assembly. It makes multiple contacts with different domains of the 23S rRNA in the assembled 50S subunit and ribosome. Forms part of the polypeptide exit tunnel. This chain is Large ribosomal subunit protein uL4, found in Chelativorans sp. (strain BNC1).